We begin with the raw amino-acid sequence, 390 residues long: MASSLEKLISSFLLVLYSTTIIVASSESRCRRFKSIISFGDSIADTGNYLHLSDVNHLPQSAFLPYGESFFHPPSGRYSDGRLIIDFIAEFLGLPYVPSYFGSQNVSFDQGINFAVYGATALDRVFLVGKGIESDFTNVSLSVQLNIFKQILPNLCTSSSRDCREMLGDSLILMGEIGVNDYNYPFFEGKSINEIKQLVPLVIKAISSAIVDLIDLGGKTFLVPGNFPLGCYPAYLTLFQTAAEEDHDPFTGCIPRLNEFGEYHNEQLKTELKRLQELYDHVNIIYADYYNSLFRLYQEPVKYGFKNRPLAACCGVGGQYNFTIGKECGHRGVSCCQNPSEYVNWDGYHLTEATHQKMAQVILNGTYASPAFDWSCSGSESVDKEYSFSS.

The signal sequence occupies residues 1-26; that stretch reads MASSLEKLISSFLLVLYSTTIIVASS. Ser42 functions as the Nucleophile in the catalytic mechanism. 3 N-linked (GlcNAc...) asparagine glycosylation sites follow: Asn105, Asn138, and Asn321. Active-site residues include Asp346 and His349. Asn364 is a glycosylation site (N-linked (GlcNAc...) asparagine).

The protein belongs to the 'GDSL' lipolytic enzyme family.

The protein localises to the secreted. The polypeptide is GDSL esterase/lipase At1g28640 (Arabidopsis thaliana (Mouse-ear cress)).